The primary structure comprises 284 residues: tRNA uridine(34) hydroxylase (284 aa).

Positions 132–226 (AGRPVVMLDT…YFEEVGGAHY (95 aa)) constitute a Rhodanese domain. C186 acts as the Cysteine persulfide intermediate in catalysis.

This sequence belongs to the TrhO family.

It catalyses the reaction uridine(34) in tRNA + AH2 + O2 = 5-hydroxyuridine(34) in tRNA + A + H2O. In terms of biological role, catalyzes oxygen-dependent 5-hydroxyuridine (ho5U) modification at position 34 in tRNAs. The sequence is that of tRNA uridine(34) hydroxylase from Burkholderia orbicola (strain MC0-3).